The chain runs to 1001 residues: Transcription-repair-coupling factor (1001 aa).

In terms of domain architecture, Helicase ATP-binding spans 499 to 658 (DLSSHRVMDR…LSQIKGISSL (160 aa)). 512–519 (GDVGFGKT) serves as a coordination point for ATP. The DEEH box signature appears at 611-614 (DEEH). The Helicase C-terminal domain maps to 679–835 (LLKEIIYREL…SIAYHDLEIR (157 aa)).

It in the N-terminal section; belongs to the UvrB family. The protein in the C-terminal section; belongs to the helicase family. RecG subfamily.

Its subcellular location is the cytoplasm. In terms of biological role, couples transcription and DNA repair by recognizing RNA polymerase (RNAP) stalled at DNA lesions. Mediates ATP-dependent release of RNAP and its truncated transcript from the DNA, and recruitment of nucleotide excision repair machinery to the damaged site. The polypeptide is Transcription-repair-coupling factor (Helicobacter pylori (strain J99 / ATCC 700824) (Campylobacter pylori J99)).